Reading from the N-terminus, the 123-residue chain is Galectin-2 (123 aa).

Positions 4–123 (KVEIMNMDMK…LRYLSVQGGF (120 aa)) constitute a Galectin domain. Position 65–71 (65–71 (WGKEQRD)) interacts with a beta-D-galactoside.

As to quaternary structure, homodimer.

Its function is as follows. This protein binds beta-galactoside. Its physiological function is not yet known. This chain is Galectin-2 (LGALS2), found in Sus scrofa (Pig).